The chain runs to 323 residues: Acetyl esterase (323 aa).

An Involved in the stabilization of the negatively charged intermediate by the formation of the oxyanion hole motif is present at residues 91 to 93; the sequence is HGG. Residues serine 165, aspartate 262, and histidine 292 contribute to the active site.

The protein belongs to the 'GDXG' lipolytic enzyme family. As to quaternary structure, homodimer. Interacts with MalT and MelA.

The protein resides in the cytoplasm. In terms of biological role, displays esterase activity towards short chain fatty esters (acyl chain length of up to 8 carbons). Able to hydrolyze triacetylglycerol (triacetin) and tributyrylglycerol (tributyrin), but not trioleylglycerol (triolein) or cholesterol oleate. Negatively regulates MalT activity by antagonizing maltotriose binding. Inhibits MelA galactosidase activity. This is Acetyl esterase from Salmonella schwarzengrund (strain CVM19633).